A 214-amino-acid polypeptide reads, in one-letter code: tRNA (guanine-N(7)-)-methyltransferase (214 aa).

S-adenosyl-L-methionine contacts are provided by Glu-44, Glu-69, Asp-96, and Asp-118. Residue Asp-118 is part of the active site. Substrate-binding positions include Lys-122, Asp-154, and 191-194; that span reads TEYE.

It belongs to the class I-like SAM-binding methyltransferase superfamily. TrmB family.

The catalysed reaction is guanosine(46) in tRNA + S-adenosyl-L-methionine = N(7)-methylguanosine(46) in tRNA + S-adenosyl-L-homocysteine. It participates in tRNA modification; N(7)-methylguanine-tRNA biosynthesis. In terms of biological role, catalyzes the formation of N(7)-methylguanine at position 46 (m7G46) in tRNA. The chain is tRNA (guanine-N(7)-)-methyltransferase from Listeria monocytogenes serotype 4b (strain F2365).